A 616-amino-acid chain; its full sequence is Dihydroxy-acid dehydratase (616 aa).

Aspartate 81 is a Mg(2+) binding site. Cysteine 122 serves as a coordination point for [2Fe-2S] cluster. Positions 123 and 124 each coordinate Mg(2+). Position 124 is an N6-carboxylysine (lysine 124). Position 195 (cysteine 195) interacts with [2Fe-2S] cluster. Position 491 (glutamate 491) interacts with Mg(2+). Serine 517 (proton acceptor) is an active-site residue.

The protein belongs to the IlvD/Edd family. In terms of assembly, homodimer. The cofactor is [2Fe-2S] cluster. Mg(2+) serves as cofactor.

The enzyme catalyses (2R)-2,3-dihydroxy-3-methylbutanoate = 3-methyl-2-oxobutanoate + H2O. The catalysed reaction is (2R,3R)-2,3-dihydroxy-3-methylpentanoate = (S)-3-methyl-2-oxopentanoate + H2O. Its pathway is amino-acid biosynthesis; L-isoleucine biosynthesis; L-isoleucine from 2-oxobutanoate: step 3/4. It participates in amino-acid biosynthesis; L-valine biosynthesis; L-valine from pyruvate: step 3/4. In terms of biological role, functions in the biosynthesis of branched-chain amino acids. Catalyzes the dehydration of (2R,3R)-2,3-dihydroxy-3-methylpentanoate (2,3-dihydroxy-3-methylvalerate) into 2-oxo-3-methylpentanoate (2-oxo-3-methylvalerate) and of (2R)-2,3-dihydroxy-3-methylbutanoate (2,3-dihydroxyisovalerate) into 2-oxo-3-methylbutanoate (2-oxoisovalerate), the penultimate precursor to L-isoleucine and L-valine, respectively. The chain is Dihydroxy-acid dehydratase from Salmonella paratyphi C (strain RKS4594).